We begin with the raw amino-acid sequence, 154 residues long: Snaclec agglucetin subunit alpha-1 (154 aa).

Positions 1–23 are cleaved as a signal peptide; that stretch reads MGRFIFVSFGLLVVFLSLSGTGA. Disulfide bonds link Cys27–Cys38, Cys55–Cys150, and Cys125–Cys142. The C-type lectin domain occupies 34 to 151; it reads YDQSCYRVFK…CGSEYAFVCK (118 aa). Asn116 carries N-linked (GlcNAc...) asparagine glycosylation.

The protein belongs to the snaclec family. Heterotetramer of the subunits alpha-1, alpha-2, beta-1 and beta-2; disulfide-linked. Expressed by the venom gland.

The protein resides in the secreted. Functionally, agglucetin specifically causes platelet aggregation and surface exposure of integrin alpha-IIb/beta-3 with a GPIb-(GP1BA-) dependent manner in washed platelets. It binds to human platelets in a saturable manner, and its binding is specifically blocked by anti-GP Ib mAb. It regulates endothelial cell survival and promotes angiogenesis by activating integrin alpha-v/beta-3 signaling through FAK/phosphatidylinositol 3-kinase (PI3K)/Akt pathway. In Deinagkistrodon acutus (Hundred-pace snake), this protein is Snaclec agglucetin subunit alpha-1.